Reading from the N-terminus, the 367-residue chain is Peptide chain release factor 2 (367 aa).

An N5-methylglutamine modification is found at Q254.

The protein belongs to the prokaryotic/mitochondrial release factor family. In terms of processing, methylated by PrmC. Methylation increases the termination efficiency of RF2.

It localises to the cytoplasm. Its function is as follows. Peptide chain release factor 2 directs the termination of translation in response to the peptide chain termination codons UGA and UAA. This is Peptide chain release factor 2 from Burkholderia mallei (strain ATCC 23344).